A 423-amino-acid chain; its full sequence is Maltooligosaccharide ABC transporter solute-binding lipoprotein (423 aa).

The N-terminal stretch at 1–24 is a signal peptide; the sequence is MSSKFMKSTAVLGTVTLASLLLVA. Cys25 carries N-palmitoyl cysteine lipidation. The S-diacylglycerol cysteine moiety is linked to residue Cys25. Substrate is bound by residues Tyr52, Asp77, Asp83, 103–104, Glu148, Asp193, Asn196, 251–254, Trp274, and Lys307; these read DR and EGAG.

It belongs to the bacterial solute-binding protein 1 family.

It localises to the cell membrane. Functionally, part of an ABC transporter complex involved in the uptake of maltodextrins. Binds glycogen-derived linear maltooligosaccharides increasing in size from maltotriose to maltooctaose with the highest affinity for maltotriose. Has a very weak affinity for maltose. Has also a very low affinity for maltotetraitol, indicating that the binding is selective for maltooligosaccharides with an intact reducing end. The protein is Maltooligosaccharide ABC transporter solute-binding lipoprotein (malX) of Streptococcus pneumoniae (strain ATCC BAA-255 / R6).